A 231-amino-acid polypeptide reads, in one-letter code: ABC transporter ATP-binding protein YtrE (231 aa).

Residues 4–231 (VQHIDHSFTI…VLKGGITVEV (228 aa)) enclose the ABC transporter domain. ATP is bound at residue 42 to 49 (GRSGSGKS).

It belongs to the ABC transporter superfamily. The complex is composed of 2 ATP-binding proteins (YtrB and YtrE), 2 transmembrane proteins (YtrC and YtrD) and a solute-binding protein (YtrF).

The protein localises to the cell membrane. Functionally, part of the ABC transporter complex YtrBCDEF that plays a role in acetoin utilization during stationary phase and sporulation. In Bacillus subtilis (strain 168), this protein is ABC transporter ATP-binding protein YtrE (ytrE).